A 589-amino-acid chain; its full sequence is GTPase LSG1-2 (589 aa).

The interval 1 to 26 (MGKSEKTSLGRSLVKHHNHMIQESKD) is disordered. The CP-type G domain occupies 158–366 (WRQLWRVLER…LCDCPGLVFP (209 aa)). Residues 176-180 (DARDP) carry the DARXP motif motif. Residues 206–209 (NKAD) form a G4 region. 206-209 (NKAD) contributes to the GTP binding site. A G5 region spans residues 237–239 (AAT). The interval 315–322 (GYPNVGKS) is G1. 318 to 323 (NVGKSS) is a binding site for GTP. The segment at 341-345 (GKTKH) is G2. Positions 359–362 (DCPG) are G3. Glycine 362 serves as a coordination point for GTP. Residues 495–509 (GSESDDSAVGDETEN) are compositionally biased toward acidic residues. 2 disordered regions span residues 495–515 (GSES…VPGI) and 534–589 (SKKV…LTMR). A Nuclear localization signal motif is present at residues 534-541 (SKKVTAKK). Basic residues predominate over residues 534-558 (SKKVTAKKQTASHKQHKKPQRKKDR). The span at 580-589 (PANTGPLTMR) shows a compositional bias: polar residues.

The protein belongs to the TRAFAC class YlqF/YawG GTPase family. In terms of tissue distribution, ubiquitous, with the highest expression in reproductive and strongly dividing tissues.

Its subcellular location is the cytoplasm. It localises to the nucleus. In terms of biological role, GTPase involved in ribosome biogenesis. Binds to 23S rRNA and associates with 60S pre-ribosomes. Involved in early cotyledon and leaf development. In Arabidopsis thaliana (Mouse-ear cress), this protein is GTPase LSG1-2.